The primary structure comprises 217 residues: Killer cell lectin-like receptor subfamily B member 1F (217 aa).

Residues 1–45 (MDTSRVYGNVKTFRSPGHKQASFPSLSTDACRCPHWHHLALKLGC) lie on the Cytoplasmic side of the membrane. Positions 31 to 34 (CRCP) match the LCK-binding motif motif. Residues 46–66 (ATLILLLLTLIGLSVFVRFLV) form a helical; Signal-anchor for type II membrane protein membrane-spanning segment. Residues 67 to 217 (QKPLIEKCSM…WICQKTLKHV (151 aa)) are Extracellular-facing. Positions 101 to 211 (HRNKCLIISQ…CSSDNHWICQ (111 aa)) constitute a C-type lectin domain. 2 cysteine pairs are disulfide-bonded: Cys122–Cys210 and Cys189–Cys202.

As to expression, expressed in natural killer cells and a subset of T-cells.

The protein resides in the membrane. Binds CLEC2I/Clr-g leading to activation of natural killer cells or stimulation of IL-2 production and proliferation of T-cells in response to antigen stimulation. May contribute to the formation of the immunological synapse between T-cells and antigen-presenting dendritic cells. The sequence is that of Killer cell lectin-like receptor subfamily B member 1F from Rattus norvegicus (Rat).